The primary structure comprises 917 residues: Spermatogenesis-associated protein 31D4 (917 aa).

Residues 29–49 form a helical membrane-spanning segment; it reads FICLSGLGLFILYLFYMVLTL. Disordered regions lie at residues 55–80, 152–195, and 773–798; these read EKNNDTQKHQGRARRKRKSVTFKDRK, SVSP…PPPL, and SQETAPKNHLLHDPETSSDEDLRSNS. Residues 63–74 show a composition bias toward basic residues; that stretch reads HQGRARRKRKSV. A compositionally biased stretch (low complexity) spans 152 to 163; that stretch reads SVSPLASSASGA. Polar residues predominate over residues 164–177; that stretch reads ESSFTLASTPSATT. The span at 782–798 shows a compositional bias: basic and acidic residues; it reads LLHDPETSSDEDLRSNS.

The protein belongs to the SPATA31 family.

Its subcellular location is the membrane. Its function is as follows. May play a role in spermatogenesis. The polypeptide is Spermatogenesis-associated protein 31D4 (SPATA31D4) (Homo sapiens (Human)).